We begin with the raw amino-acid sequence, 612 residues long: 1,8-cineole synthase, chloroplastic (612 aa).

A chloroplast-targeting transit peptide spans 1 to 52; sequence MALVSVAPLASRSCLSKSLISSTHELKPLRRTILPTLRWKSATPSINMCLTT. Positions 363, 367, and 515 each coordinate Mg(2+). A DDXXD motif motif is present at residues 363–367; it reads DDIYD.

It belongs to the terpene synthase family. Tpsd subfamily. The cofactor is Mg(2+). Mn(2+) is required as a cofactor.

It is found in the plastid. It localises to the chloroplast. It catalyses the reaction (2E)-geranyl diphosphate + H2O = 1,8-cineole + diphosphate. It functions in the pathway terpene metabolism; oleoresin biosynthesis. Functionally, terpene synthase (TPS) involved in the biosynthesis of monoterpene natural products included in conifer oleoresin secretions and volatile emissions; these compounds contribute to biotic and abiotic stress defense against herbivores and pathogens. Catalyzes the conversion of (2E)-geranyl diphosphate (GPP) to 1,8-cineole. The polypeptide is 1,8-cineole synthase, chloroplastic (Picea sitchensis (Sitka spruce)).